Consider the following 115-residue polypeptide: MAKIQFIKGIDEQTVPEIRLTRSRDGNTGTAIFSFINPTVFLLHSSSQNYGEITGMYLQDDEGELSTRNVTANFVNGKPKAVEAVYLIRNKSGWDRLMRFINKYAEDKNMSFYKS.

Belongs to the Psb28 family. Part of the photosystem II complex.

It is found in the plastid. Its subcellular location is the chloroplast thylakoid membrane. This chain is Photosystem II reaction center Psb28 protein, found in Cyanidium caldarium (Red alga).